The primary structure comprises 242 residues: 1-(5-phosphoribosyl)-5-[(5-phosphoribosylamino)methylideneamino] imidazole-4-carboxamide isomerase (242 aa).

The active-site Proton acceptor is D10. The active-site Proton donor is D132.

This sequence belongs to the HisA/HisF family.

It is found in the cytoplasm. It carries out the reaction 1-(5-phospho-beta-D-ribosyl)-5-[(5-phospho-beta-D-ribosylamino)methylideneamino]imidazole-4-carboxamide = 5-[(5-phospho-1-deoxy-D-ribulos-1-ylimino)methylamino]-1-(5-phospho-beta-D-ribosyl)imidazole-4-carboxamide. It functions in the pathway amino-acid biosynthesis; L-histidine biosynthesis; L-histidine from 5-phospho-alpha-D-ribose 1-diphosphate: step 4/9. This is 1-(5-phosphoribosyl)-5-[(5-phosphoribosylamino)methylideneamino] imidazole-4-carboxamide isomerase from Methanopyrus kandleri (strain AV19 / DSM 6324 / JCM 9639 / NBRC 100938).